Here is a 900-residue protein sequence, read N- to C-terminus: Probable beta-mannosidase (900 aa).

Positions 1–21 (MRTSLVVCLFWLLFQLHTTHG) are cleaved as a signal peptide. 3 N-linked (GlcNAc...) asparagine glycosylation sites follow: asparagine 38, asparagine 42, and asparagine 131. Glutamate 463 (proton donor) is an active-site residue. N-linked (GlcNAc...) asparagine glycosylation is found at asparagine 477, asparagine 576, asparagine 661, and asparagine 738.

The protein belongs to the glycosyl hydrolase 2 family.

The protein localises to the lysosome. It catalyses the reaction Hydrolysis of terminal, non-reducing beta-D-mannose residues in beta-D-mannosides.. This chain is Probable beta-mannosidase, found in Caenorhabditis elegans.